The chain runs to 307 residues: Ribonuclease Z (307 aa).

Residues H63, H65, D67, H68, H141, D212, and H270 each contribute to the Zn(2+) site. Residue D67 is the Proton acceptor of the active site.

This sequence belongs to the RNase Z family. Homodimer. Requires Zn(2+) as cofactor.

It carries out the reaction Endonucleolytic cleavage of RNA, removing extra 3' nucleotides from tRNA precursor, generating 3' termini of tRNAs. A 3'-hydroxy group is left at the tRNA terminus and a 5'-phosphoryl group is left at the trailer molecule.. Its function is as follows. Zinc phosphodiesterase, which displays some tRNA 3'-processing endonuclease activity. Probably involved in tRNA maturation, by removing a 3'-trailer from precursor tRNA. The polypeptide is Ribonuclease Z (Bacillus cereus (strain ZK / E33L)).